A 57-amino-acid polypeptide reads, in one-letter code: UPF0434 protein Shal_2504 (57 aa).

The protein belongs to the UPF0434 family.

The protein is UPF0434 protein Shal_2504 of Shewanella halifaxensis (strain HAW-EB4).